The sequence spans 182 residues: Pyruvate synthase subunit PorC (182 aa).

Heterotetramer of one alpha, one beta, one delta and one gamma chain.

The enzyme catalyses 2 oxidized [2Fe-2S]-[ferredoxin] + pyruvate + CoA = 2 reduced [2Fe-2S]-[ferredoxin] + acetyl-CoA + CO2 + H(+). The polypeptide is Pyruvate synthase subunit PorC (porC) (Methanosarcina barkeri (strain Fusaro / DSM 804)).